The chain runs to 283 residues: Putative pyruvate, phosphate dikinase regulatory protein (283 aa).

154 to 161 (GVSRTSKT) lines the ADP pocket.

This sequence belongs to the pyruvate, phosphate/water dikinase regulatory protein family. PDRP subfamily.

The enzyme catalyses N(tele)-phospho-L-histidyl/L-threonyl-[pyruvate, phosphate dikinase] + ADP = N(tele)-phospho-L-histidyl/O-phospho-L-threonyl-[pyruvate, phosphate dikinase] + AMP + H(+). It catalyses the reaction N(tele)-phospho-L-histidyl/O-phospho-L-threonyl-[pyruvate, phosphate dikinase] + phosphate + H(+) = N(tele)-phospho-L-histidyl/L-threonyl-[pyruvate, phosphate dikinase] + diphosphate. Bifunctional serine/threonine kinase and phosphorylase involved in the regulation of the pyruvate, phosphate dikinase (PPDK) by catalyzing its phosphorylation/dephosphorylation. The chain is Putative pyruvate, phosphate dikinase regulatory protein from Afipia carboxidovorans (strain ATCC 49405 / DSM 1227 / KCTC 32145 / OM5) (Oligotropha carboxidovorans).